A 389-amino-acid chain; its full sequence is tRNA(Met) cytidine acetate ligase (389 aa).

ATP contacts are provided by residues isoleucine 8–leucine 21, glycine 97, asparagine 153, and arginine 176.

This sequence belongs to the TmcAL family.

The protein localises to the cytoplasm. It carries out the reaction cytidine(34) in elongator tRNA(Met) + acetate + ATP = N(4)-acetylcytidine(34) in elongator tRNA(Met) + AMP + diphosphate. In terms of biological role, catalyzes the formation of N(4)-acetylcytidine (ac(4)C) at the wobble position of elongator tRNA(Met), using acetate and ATP as substrates. First activates an acetate ion to form acetyladenylate (Ac-AMP) and then transfers the acetyl group to tRNA to form ac(4)C34. This is tRNA(Met) cytidine acetate ligase from Lactococcus lactis subsp. lactis (strain IL1403) (Streptococcus lactis).